Consider the following 79-residue polypeptide: UPF0180 protein Bcer98_1118 (79 aa).

Belongs to the UPF0180 family.

This Bacillus cytotoxicus (strain DSM 22905 / CIP 110041 / 391-98 / NVH 391-98) protein is UPF0180 protein Bcer98_1118.